A 467-amino-acid polypeptide reads, in one-letter code: Argininosuccinate lyase (467 aa).

It belongs to the lyase 1 family. Argininosuccinate lyase subfamily.

The protein resides in the cytoplasm. The enzyme catalyses 2-(N(omega)-L-arginino)succinate = fumarate + L-arginine. It functions in the pathway amino-acid biosynthesis; L-arginine biosynthesis; L-arginine from L-ornithine and carbamoyl phosphate: step 3/3. The chain is Argininosuccinate lyase from Rhizobium etli (strain ATCC 51251 / DSM 11541 / JCM 21823 / NBRC 15573 / CFN 42).